Consider the following 274-residue polypeptide: Diaminopimelate epimerase (274 aa).

Residues Asn-11 and Asn-62 each contribute to the substrate site. The Proton donor role is filled by Cys-71. Residues 72–73 (GN), Asn-157, Asn-190, and 208–209 (ER) each bind substrate. Cys-217 serves as the catalytic Proton acceptor. 218–219 (GT) contributes to the substrate binding site.

Belongs to the diaminopimelate epimerase family. In terms of assembly, homodimer.

The protein localises to the cytoplasm. The enzyme catalyses (2S,6S)-2,6-diaminopimelate = meso-2,6-diaminopimelate. It functions in the pathway amino-acid biosynthesis; L-lysine biosynthesis via DAP pathway; DL-2,6-diaminopimelate from LL-2,6-diaminopimelate: step 1/1. In terms of biological role, catalyzes the stereoinversion of LL-2,6-diaminopimelate (L,L-DAP) to meso-diaminopimelate (meso-DAP), a precursor of L-lysine and an essential component of the bacterial peptidoglycan. This is Diaminopimelate epimerase from Elusimicrobium minutum (strain Pei191).